A 32-amino-acid chain; its full sequence is MEALVYTFLLIGTLIVIFFAVFFRETPRIIKK.

The helical transmembrane segment at Ala-3–Phe-23 threads the bilayer.

Belongs to the PsbT family. As to quaternary structure, PSII is composed of 1 copy each of membrane proteins PsbA, PsbB, PsbC, PsbD, PsbE, PsbF, PsbH, PsbI, PsbJ, PsbK, PsbL, PsbM, PsbT, PsbX, PsbY, PsbZ, Psb30/Ycf12, at least 3 peripheral proteins of the oxygen-evolving complex and a large number of cofactors. It forms dimeric complexes.

It localises to the plastid. The protein resides in the chloroplast thylakoid membrane. Functionally, found at the monomer-monomer interface of the photosystem II (PS II) dimer, plays a role in assembly and dimerization of PSII. PSII is a light-driven water plastoquinone oxidoreductase, using light energy to abstract electrons from H(2)O, generating a proton gradient subsequently used for ATP formation. This is Photosystem II reaction center protein T from Phaeodactylum tricornutum (strain CCAP 1055/1).